Consider the following 334-residue polypeptide: Fructose-1,6-bisphosphatase class 1 (334 aa).

Residues Glu89, Asp112, Leu114, and Asp115 each coordinate Mg(2+). Substrate is bound by residues 115–118 (DGSS), Asn208, Tyr241, 259–261 (YLY), and Lys271. Glu277 is a Mg(2+) binding site.

This sequence belongs to the FBPase class 1 family. Homotetramer. Mg(2+) is required as a cofactor.

It is found in the cytoplasm. The catalysed reaction is beta-D-fructose 1,6-bisphosphate + H2O = beta-D-fructose 6-phosphate + phosphate. It participates in carbohydrate biosynthesis; gluconeogenesis. This is Fructose-1,6-bisphosphatase class 1 from Pectobacterium atrosepticum (strain SCRI 1043 / ATCC BAA-672) (Erwinia carotovora subsp. atroseptica).